The sequence spans 493 residues: Protein kinase PINOID 2 (493 aa).

Positions 1–53 (MAAIKEESDYDSSRSSLTAPDSRRSWISDIGSSSSVSARSFGGDTPASSCRYK) are disordered. The span at 27–44 (ISDIGSSSSVSARSFGGD) shows a compositional bias: low complexity. In terms of domain architecture, Protein kinase spans 80–443 (FRLVRRLGSG…SAEVKRHPFF (364 aa)). ATP is bound by residues 86–94 (LGSGDLGNV) and Lys-120. Catalysis depends on Asp-216, which acts as the Proton acceptor. Residues 295-306 (GGGAAAGNNGDG) are compositionally biased toward gly residues. Disordered regions lie at residues 295–320 (GGGAAAGNNGDGDGNDEEAETETAEP) and 458–493 (EVPAPPAPAPKKVMTMSKKERQEPYNYRPENHFDYF). Over residues 307–319 (DGNDEEAETETAE) the composition is skewed to acidic residues. Positions 444 to 493 (KGVNWALVRSVRPPEVPAPPAPAPKKVMTMSKKERQEPYNYRPENHFDYF) constitute an AGC-kinase C-terminal domain. Residues 474-493 (SKKERQEPYNYRPENHFDYF) show a composition bias toward basic and acidic residues.

Belongs to the protein kinase superfamily. Ser/Thr protein kinase family.

The enzyme catalyses L-seryl-[protein] + ATP = O-phospho-L-seryl-[protein] + ADP + H(+). It catalyses the reaction L-threonyl-[protein] + ATP = O-phospho-L-threonyl-[protein] + ADP + H(+). Serine/threonine-protein kinase involved in the regulation of auxin signaling. This chain is Protein kinase PINOID 2 (PID2), found in Oryza sativa subsp. japonica (Rice).